A 207-amino-acid chain; its full sequence is Large ribosomal subunit protein uL4 (207 aa).

The tract at residues 53 to 76 (NRSAVRGGGRKPWRQKGTGRARQG) is disordered. The span at 60 to 71 (GGRKPWRQKGTG) shows a compositional bias: basic residues.

The protein belongs to the universal ribosomal protein uL4 family. In terms of assembly, part of the 50S ribosomal subunit.

Functionally, one of the primary rRNA binding proteins, this protein initially binds near the 5'-end of the 23S rRNA. It is important during the early stages of 50S assembly. It makes multiple contacts with different domains of the 23S rRNA in the assembled 50S subunit and ribosome. Its function is as follows. Forms part of the polypeptide exit tunnel. This chain is Large ribosomal subunit protein uL4, found in Staphylococcus saprophyticus subsp. saprophyticus (strain ATCC 15305 / DSM 20229 / NCIMB 8711 / NCTC 7292 / S-41).